Here is a 150-residue protein sequence, read N- to C-terminus: 3-dehydroquinate dehydratase (150 aa).

The active-site Proton acceptor is tyrosine 22. Substrate-binding residues include asparagine 73, histidine 79, and aspartate 86. Histidine 99 acts as the Proton donor in catalysis. Substrate-binding positions include 100–101 and arginine 110; that span reads LS.

It belongs to the type-II 3-dehydroquinase family. As to quaternary structure, homododecamer.

The enzyme catalyses 3-dehydroquinate = 3-dehydroshikimate + H2O. It functions in the pathway metabolic intermediate biosynthesis; chorismate biosynthesis; chorismate from D-erythrose 4-phosphate and phosphoenolpyruvate: step 3/7. Catalyzes a trans-dehydration via an enolate intermediate. In Dinoroseobacter shibae (strain DSM 16493 / NCIMB 14021 / DFL 12), this protein is 3-dehydroquinate dehydratase.